A 927-amino-acid chain; its full sequence is Disks large homolog 1 (927 aa).

In terms of domain architecture, L27 spans R4–P64. 3 PDZ domains span residues E223–K310, D318–T405, and K466–P547. The SH3 domain maps to K581 to E651. A disordered region spans residues D692–Q719. Residues H704–R717 show a composition bias toward polar residues. A Guanylate kinase-like domain is found at S737–E912.

Belongs to the MAGUK family.

It is found in the cell membrane. Its subcellular location is the endoplasmic reticulum membrane. The protein resides in the cell junction. It localises to the cytoplasm. The protein localises to the apical cell membrane. Its function is as follows. Essential multidomain scaffolding protein required for normal development. Recruits channels, receptors and signaling molecules to discrete plasma membrane domains in polarized cells. Promotes epithelial cell layer barrier function via maintaining cell-cell adhesion. May play a role in adherens junction assembly, signal transduction and cell proliferation. This chain is Disks large homolog 1 (dlg1), found in Xenopus tropicalis (Western clawed frog).